A 194-amino-acid chain; its full sequence is Small ribosomal subunit protein uS7 (194 aa).

This sequence belongs to the universal ribosomal protein uS7 family. As to quaternary structure, part of the 30S ribosomal subunit.

One of the primary rRNA binding proteins, it binds directly to 16S rRNA where it nucleates assembly of the head domain of the 30S subunit. Is located at the subunit interface close to the decoding center. In Sulfurisphaera tokodaii (strain DSM 16993 / JCM 10545 / NBRC 100140 / 7) (Sulfolobus tokodaii), this protein is Small ribosomal subunit protein uS7.